Here is a 950-residue protein sequence, read N- to C-terminus: Oxysterol-binding protein-related protein 1 (950 aa).

An interaction with RAB7A region spans residues 1–237; it reads MNTEAEQQLL…NKVVHKALKR (237 aa). ANK repeat units lie at residues 47-76, 80-109, and 175-204; these read LGWT…KVNM, MGDT…DTTV, and LGNT…DPSL. Positions 235–334 constitute a PH domain; that stretch reads LKRFEGPLWK…WLEAIEEHSA (100 aa). Residues 430-463 are a coiled coil; that stretch reads NFKLEQEQEKNKILSEALETLATEHHELERSLVE. The short motif at 469 to 483 is the FFAT element; it reads SILSEDEFYDALSGS. Disordered regions lie at residues 795-821 and 881-913; these read KKNT…VPDS and MENG…SEED. Positions 877–913 form a coiled coil; the sequence is DIRAMENGEIDQASEEKKRLEEKQRAARKNRSKSEED. Basic and acidic residues predominate over residues 890–901; that stretch reads SEEKKRLEEKQR.

The protein belongs to the OSBP family. As to quaternary structure, interacts (via FFAT motif) with VAPA. Interacts (via FFAT motif) with VAPB. Interacts with the GTP-bound form of RAB7A. Interacts with OAS1B. Interacts (via FFAT motif) with MOSPD2 (via MSP domain). Detected in prostate and liver.

It is found in the late endosome. Its function is as follows. Binds phospholipids; exhibits strong binding to phosphatidic acid and weak binding to phosphatidylinositol 3-phosphate. Stabilizes GTP-bound RAB7A on late endosomes/lysosomes and alters functional properties of late endocytic compartments via its interaction with RAB7A. Binds 25-hydroxycholesterol and cholesterol. This is Oxysterol-binding protein-related protein 1 from Rattus norvegicus (Rat).